We begin with the raw amino-acid sequence, 398 residues long: Bifunctional enzyme IspD/IspF (398 aa).

The 2-C-methyl-D-erythritol 4-phosphate cytidylyltransferase stretch occupies residues 1–234 (MPSSKRTAAI…ARLAAALGDI (234 aa)). Residues 235–398 (RTGTGYDVHA…LPWNDKGRDT (164 aa)) form a 2-C-methyl-D-erythritol 2,4-cyclodiphosphate synthase region. A divalent metal cation is bound by residues Asp-241 and His-243. 4-CDP-2-C-methyl-D-erythritol 2-phosphate-binding positions include 241–243 (DVH) and 267–268 (HS). A divalent metal cation is bound at residue His-275. Residues 289 to 291 (DIG), 365 to 368 (TTSE), Phe-372, and Arg-375 each bind 4-CDP-2-C-methyl-D-erythritol 2-phosphate.

The protein in the N-terminal section; belongs to the IspD/TarI cytidylyltransferase family. IspD subfamily. This sequence in the C-terminal section; belongs to the IspF family. The cofactor is a divalent metal cation.

The catalysed reaction is 2-C-methyl-D-erythritol 4-phosphate + CTP + H(+) = 4-CDP-2-C-methyl-D-erythritol + diphosphate. The enzyme catalyses 4-CDP-2-C-methyl-D-erythritol 2-phosphate = 2-C-methyl-D-erythritol 2,4-cyclic diphosphate + CMP. Its pathway is isoprenoid biosynthesis; isopentenyl diphosphate biosynthesis via DXP pathway; isopentenyl diphosphate from 1-deoxy-D-xylulose 5-phosphate: step 2/6. It functions in the pathway isoprenoid biosynthesis; isopentenyl diphosphate biosynthesis via DXP pathway; isopentenyl diphosphate from 1-deoxy-D-xylulose 5-phosphate: step 4/6. Its function is as follows. Bifunctional enzyme that catalyzes the formation of 4-diphosphocytidyl-2-C-methyl-D-erythritol from CTP and 2-C-methyl-D-erythritol 4-phosphate (MEP) (IspD), and catalyzes the conversion of 4-diphosphocytidyl-2-C-methyl-D-erythritol 2-phosphate (CDP-ME2P) to 2-C-methyl-D-erythritol 2,4-cyclodiphosphate (ME-CPP) with a corresponding release of cytidine 5-monophosphate (CMP) (IspF). The protein is Bifunctional enzyme IspD/IspF of Nitrobacter winogradskyi (strain ATCC 25391 / DSM 10237 / CIP 104748 / NCIMB 11846 / Nb-255).